Reading from the N-terminus, the 591-residue chain is L-fucose isomerase (591 aa).

Active-site proton acceptor residues include Glu337 and Asp361. The Mn(2+) site is built by Glu337, Asp361, and His528.

Belongs to the L-fucose isomerase family. As to quaternary structure, homohexamer. It depends on Mn(2+) as a cofactor.

The protein resides in the cytoplasm. It carries out the reaction L-fucose = L-fuculose. Its pathway is carbohydrate degradation; L-fucose degradation; L-lactaldehyde and glycerone phosphate from L-fucose: step 1/3. In terms of biological role, converts the aldose L-fucose into the corresponding ketose L-fuculose. This is L-fucose isomerase from Escherichia coli O6:K15:H31 (strain 536 / UPEC).